The primary structure comprises 476 residues: Proline--tRNA ligase (476 aa).

It belongs to the class-II aminoacyl-tRNA synthetase family. ProS type 3 subfamily. In terms of assembly, homodimer.

It localises to the cytoplasm. The enzyme catalyses tRNA(Pro) + L-proline + ATP = L-prolyl-tRNA(Pro) + AMP + diphosphate. Its function is as follows. Catalyzes the attachment of proline to tRNA(Pro) in a two-step reaction: proline is first activated by ATP to form Pro-AMP and then transferred to the acceptor end of tRNA(Pro). In Mycoplasmopsis pulmonis (strain UAB CTIP) (Mycoplasma pulmonis), this protein is Proline--tRNA ligase.